A 233-amino-acid polypeptide reads, in one-letter code: Uracil-DNA glycosylase (233 aa).

D70 functions as the Proton acceptor in the catalytic mechanism.

Belongs to the uracil-DNA glycosylase (UDG) superfamily. UNG family.

It is found in the cytoplasm. It carries out the reaction Hydrolyzes single-stranded DNA or mismatched double-stranded DNA and polynucleotides, releasing free uracil.. In terms of biological role, excises uracil residues from the DNA which can arise as a result of misincorporation of dUMP residues by DNA polymerase or due to deamination of cytosine. In Helicobacter pylori (strain G27), this protein is Uracil-DNA glycosylase.